Reading from the N-terminus, the 127-residue chain is Fluoride-specific ion channel FluC (127 aa).

4 helical membrane passes run 4-24 (LLLA…MLSM), 35-55 (IGTL…FAWF), 71-91 (TGFC…VFLL), and 103-123 (VLIN…LFSA). Residues glycine 75 and threonine 78 each coordinate Na(+).

It belongs to the fluoride channel Fluc/FEX (TC 1.A.43) family.

Its subcellular location is the cell inner membrane. The enzyme catalyses fluoride(in) = fluoride(out). Na(+) is not transported, but it plays an essential structural role and its presence is essential for fluoride channel function. In terms of biological role, fluoride-specific ion channel. Important for reducing fluoride concentration in the cell, thus reducing its toxicity. This is Fluoride-specific ion channel FluC from Salmonella agona (strain SL483).